The chain runs to 471 residues: 3-isopropylmalate dehydratase large subunit (471 aa).

The [4Fe-4S] cluster site is built by C347, C407, and C410. A disordered region spans residues 417–443 (TLQPGERSASTSNRNFEGRQGKGGRTH).

This sequence belongs to the aconitase/IPM isomerase family. LeuC type 1 subfamily. Heterodimer of LeuC and LeuD. It depends on [4Fe-4S] cluster as a cofactor.

The catalysed reaction is (2R,3S)-3-isopropylmalate = (2S)-2-isopropylmalate. Its pathway is amino-acid biosynthesis; L-leucine biosynthesis; L-leucine from 3-methyl-2-oxobutanoate: step 2/4. In terms of biological role, catalyzes the isomerization between 2-isopropylmalate and 3-isopropylmalate, via the formation of 2-isopropylmaleate. The sequence is that of 3-isopropylmalate dehydratase large subunit from Nocardioides sp. (strain ATCC BAA-499 / JS614).